The following is a 578-amino-acid chain: MRLWLRGLVYQARRSSWGVFRIHTQPPPPPIPEVVATWEAISLGKRPVPEYFNFAHDVLDVWSQLEKTGHRPPNPAFWWVNGSGTEVKWTFEELGKQSRKAANILEGACGLKPGDRLMLVLPRLPEWWLTIVACMRTGVVMIPGISQLTQKDLKYRLQAARVKSIITSDALAPHVDAISADCPSLQSRLLVSDTSRPGWINFRELLRVASPEHNCLRTRSGDSMAIYFTSGTTGTPKMVEHSQCSYGLGFVASGRRLMALTESDIFWNTTDTGWVKAAWTLFSAWANGACVFVHELPQVDAQTILNTLCRFPITTICCVPTLFRLLVQEDLTRYKFQCLRHCLAGGEALNSDVRDKWKNQTGLEIHEGYGQSETVLICGNFRGSTIKSGSMGKASPPYDVQIVDEEGNVLPPGKEGNIAIRIKPTRPFCLFNCYLDNPEKTAASEQGDFYITGDRAHMDEDGYFWFVGRNDDVINSSSYRIGPVEVESALAEHPAVLESAVVSSPDPIRGEVVKAFIVLSPAYVSHDPEALTRELQEHVKTVTAPYKYPRKVAFISELPKTVSGKILRSKLRNQEWGR.

The N-terminal 22 residues, 1-22, are a transit peptide targeting the mitochondrion; the sequence is MRLWLRGLVYQARRSSWGVFRI. Lys-96 carries the post-translational modification N6-acetyllysine; alternate. N6-succinyllysine; alternate is present on Lys-96. Residue Lys-151 is modified to N6-acetyllysine. 229-237 is an ATP binding site; that stretch reads TSGTTGTPK. Lys-335 carries the post-translational modification N6-acetyllysine. ATP is bound by residues 367-372, Asp-454, Arg-469, and Lys-565; that span reads EGYGQS.

The protein belongs to the ATP-dependent AMP-binding enzyme family. Mg(2+) serves as cofactor. The cofactor is Mn(2+).

The protein localises to the mitochondrion matrix. It carries out the reaction a medium-chain fatty acid + ATP + CoA = a medium-chain fatty acyl-CoA + AMP + diphosphate. Catalyzes the activation of fatty acids by CoA to produce an acyl-CoA, the first step in fatty acid metabolism. The protein is Acyl-coenzyme A synthetase ACSM5, mitochondrial (Acsm5) of Rattus norvegicus (Rat).